Reading from the N-terminus, the 400-residue chain is tRNA-specific adenosine deaminase TAD3 (400 aa).

The 136-residue stretch at 250 to 385 (SQWHPLRHAS…KSLNHHYAVF (136 aa)) folds into the CMP/dCMP-type deaminase domain. A Zn(2+)-binding site is contributed by histidine 257. Positions 273 to 320 (LFPNPSKIFDQDHVPPSNTDSPAKKQKTSSQSPDVQNDSREETVRDPS) are disordered. Residues 309-320 (NDSREETVRDPS) are compositionally biased toward basic and acidic residues. Residues cysteine 339 and cysteine 342 each contribute to the Zn(2+) site.

Belongs to the cytidine and deoxycytidylate deaminase family. ADAT3 subfamily. Interacts with TAD2.

It localises to the nucleus. Its subcellular location is the cytoplasm. It carries out the reaction adenosine(34) in tRNA + H2O + H(+) = inosine(34) in tRNA + NH4(+). In terms of biological role, involved in RNA editing. Catalyzes the specific deamination of adenosine-34 in several cytosolic tRNA species. Generates inosine at the wobble position of the anticodon loop. This Arabidopsis thaliana (Mouse-ear cress) protein is tRNA-specific adenosine deaminase TAD3.